The sequence spans 254 residues: Homeobox protein BarH-like 1 (254 aa).

The disordered stretch occupies residues 1–20 (MQRPGEPGAARFGPPEGCAD). The homeobox DNA-binding region spans 142 to 201 (GRRSRTVFTELQLMGLEKRFEKQKYLSTPDRIDLAESLGLSQLQVKTWYQNRRMKWKKIV). The tract at residues 204-254 (GGGLESPTKPKGRPKKNSIPTSEQLTEQERAKDAEKPAEVPGEPSDRSRED) is disordered. The segment covering 230–254 (EQERAKDAEKPAEVPGEPSDRSRED) has biased composition (basic and acidic residues).

The protein belongs to the BAR homeobox family. Widely expressed. Expressed at higher levels in testis and heart. Detected in craniofacial tissue and adult iris, but not in lymphocytes, fibroblasts, choroid retina, retinal pigment epithelium, kidney, or fetal liver.

The protein resides in the nucleus. In terms of biological role, transcription factor, which is involved in craniofacial development, in odontogenesis and in stomach organogenesis. May have a role in the differentiation of molars from incisors. Plays a role in suppressing endodermal Wnt activity. Binds to a regulatory module of the NCAM promoter. The protein is Homeobox protein BarH-like 1 (BARX1) of Homo sapiens (Human).